The sequence spans 208 residues: Small ribosomal subunit protein uS5 (208 aa).

A compositionally biased stretch (basic and acidic residues) spans 1-21 (MSDREQRDGGRSAENNNDRKG). The interval 1–38 (MSDREQRDGGRSAENNNDRKGRNNGRRNDRRNHQDNER) is disordered. Residues 41–104 (YIERVVTINR…EEARKNFFRV (64 aa)) form the S5 DRBM domain.

It belongs to the universal ribosomal protein uS5 family. Part of the 30S ribosomal subunit. Contacts proteins S4 and S8.

With S4 and S12 plays an important role in translational accuracy. In terms of biological role, located at the back of the 30S subunit body where it stabilizes the conformation of the head with respect to the body. This Corynebacterium aurimucosum (strain ATCC 700975 / DSM 44827 / CIP 107346 / CN-1) (Corynebacterium nigricans) protein is Small ribosomal subunit protein uS5.